The chain runs to 155 residues: Ribosome maturation factor RimP (155 aa).

The protein belongs to the RimP family.

It localises to the cytoplasm. In terms of biological role, required for maturation of 30S ribosomal subunits. This chain is Ribosome maturation factor RimP, found in Prochlorococcus marinus (strain MIT 9211).